A 380-amino-acid polypeptide reads, in one-letter code: Alpha-N-acetylneuraminate alpha-2,8-sialyltransferase ST8SIA3 (380 aa).

At 1-17 (MRNCKMARVASVLGLVM) the chain is on the cytoplasmic side. The chain crosses the membrane as a helical; Signal-anchor for type II membrane protein span at residues 18-33 (LSVALLILSLISYVSL). The Lumenal segment spans residues 34-380 (KKENIFTTPK…LTKLTLSHCA (347 aa)). N-linked (GlcNAc...) asparagine glycans are attached at residues asparagine 93 and asparagine 113. 2 cysteine pairs are disulfide-bonded: cysteine 162–cysteine 313 and cysteine 176–cysteine 379. Residues asparagine 167 and asparagine 190 each coordinate CMP-N-acetyl-beta-neuraminate. N-linked (GlcNAc...) asparagine glycosylation is present at asparagine 206. Positions 300, 301, 302, 322, 336, and 337 each coordinate CMP-N-acetyl-beta-neuraminate. The Proton donor/acceptor role is filled by histidine 354.

It belongs to the glycosyltransferase 29 family. As to quaternary structure, homodimer. As to expression, expressed in neurons in brain with higher expression in the striatum than in the hippocampus, cortex, and cerebellum (at protein level). Expressed in testes.

It is found in the golgi apparatus membrane. It carries out the reaction a ganglioside GM3 (d18:1(4E)) + CMP-N-acetyl-beta-neuraminate = a ganglioside GD3 (d18:1(4E)) + CMP + H(+). The catalysed reaction is a ganglioside GM3 + CMP-N-acetyl-beta-neuraminate = a ganglioside GD3 + CMP + H(+). The enzyme catalyses an N-acetyl-alpha-neuraminyl-(2-&gt;3)-beta-D-galactosyl derivative + CMP-N-acetyl-beta-neuraminate = an N-acetyl-alpha-neuraminyl-(2-&gt;8)-N-acetyl-alpha-neuraminyl-(2-&gt;3)-beta-D-galactosyl derivative + CMP + H(+). It catalyses the reaction an N-acetyl-alpha-neuraminyl-(2-&gt;3)-beta-D-galactosyl-(1-&gt;4)-N-acetyl-beta-D-glucosaminyl derivative + CMP-N-acetyl-beta-neuraminate = an alpha-Neu5Ac-(2-&gt;8)-alpha-Neu5Ac-(2-&gt;3)-beta-D-Gal-(1-&gt;4)-beta-D-GlcNAc derivative + CMP + H(+). The protein operates within protein modification; protein glycosylation. Functionally, catalyzes the transfer of sialic acid from a CMP-linked sialic acid donor onto a terminal alpha-2,3-, alpha-2,6-, or alpha-2,8-linked sialic acid of an acceptor, such as N-linked oligosaccharides of glycoproteins and glycolipids through alpha-2,8-linkages. Forms oligosialic and polysialic acid on various sialylated N-acetyllactosamine oligosaccharides of glycoproteins, including FETUB N-glycans, a2-HS-glycoprotein (AHSG) and alpha 2,3-sialylated glycosphingolipids, such as alpha 2,3-sialylparagloboside and ganglioside GM3 and to a lesser extent NCAM1 N-glycans. However, it is much more specific to N-linked oligosaccharides of glycoproteins than glycosphingolipids. 2,3-sialylparagloboside served as the best acceptor substrate among the glycolipids. alpha-Neu5Ac-(2-&gt;8)-alpha-Neu5Ac-(2-&gt;3)-beta-D-Gal-(1-&gt;4)-6S-D-GlcNAc and monosialyl and disialyl N-acetyllactosamines are the best acceptor substrates among glycoproteins. May play critical role in the striatum by mediating the formation of disialylated and trisialylated terminal glycotopes on N- and O-glycans of specific striatal proteins, regulating their distribution in lipid rafts, affecting their interaction with other binding partners, and subsequently modulating striatal functions. The sequence is that of Alpha-N-acetylneuraminate alpha-2,8-sialyltransferase ST8SIA3 from Mus musculus (Mouse).